The chain runs to 966 residues: Catenin alpha-2 (966 aa).

Residues 924–940 (PEKKPLVKREKPEEYQT) show a composition bias toward basic and acidic residues. The interval 924 to 952 (PEKKPLVKREKPEEYQTRVRRGSQKKHIS) is disordered. Residues 941-951 (RVRRGSQKKHI) show a composition bias toward basic residues.

Belongs to the vinculin/alpha-catenin family.

The protein localises to the cell membrane. The protein resides in the cytoplasm. It localises to the cytoskeleton. It is found in the cell junction. Its subcellular location is the adherens junction. The protein localises to the cell projection. The protein resides in the axon. It localises to the nucleus. Its function is as follows. May function as a linker between cadherin adhesion receptors and the cytoskeleton to regulate cell-cell adhesion and differentiation in the nervous system. This Xenopus laevis (African clawed frog) protein is Catenin alpha-2 (ctnna2).